Reading from the N-terminus, the 467-residue chain is Ankyrin repeat and SOCS box protein 10 (467 aa).

7 ANK repeats span residues 115-144, 147-176, 180-209, 214-243, 247-289, 293-322, and 326-361; these read ELTT…KPDS, GGRT…DPNT, DGKR…QVDG, EEET…CPDV, EGWT…DADA, DKQR…NANA, and GGHT…AVRV. The SOCS box domain occupies 412-467; it reads YSSLFALVRQPRSLQHLCRCALRSHLEGCLPHALPRLPLPPRMLRFLQLDFEDLLY.

Belongs to the ankyrin SOCS box (ASB) family.

The protein localises to the nucleus. Its subcellular location is the cytoplasm. The protein operates within protein modification; protein ubiquitination. Its function is as follows. May be a substrate-recognition component of a SCF-like ECS (Elongin-Cullin-SOCS-box protein) E3 ubiquitin-protein ligase complex which mediates the ubiquitination and subsequent proteasomal degradation of target proteins. This Mus musculus (Mouse) protein is Ankyrin repeat and SOCS box protein 10 (Asb10).